A 309-amino-acid chain; its full sequence is Aspartate carbamoyltransferase catalytic subunit (309 aa).

R58 and T59 together coordinate carbamoyl phosphate. K86 is a binding site for L-aspartate. The carbamoyl phosphate site is built by R108, H136, and Q139. R169 and R223 together coordinate L-aspartate. The carbamoyl phosphate site is built by G264 and P265.

It belongs to the aspartate/ornithine carbamoyltransferase superfamily. ATCase family. Heterododecamer (2C3:3R2) of six catalytic PyrB chains organized as two trimers (C3), and six regulatory PyrI chains organized as three dimers (R2).

It catalyses the reaction carbamoyl phosphate + L-aspartate = N-carbamoyl-L-aspartate + phosphate + H(+). Its pathway is pyrimidine metabolism; UMP biosynthesis via de novo pathway; (S)-dihydroorotate from bicarbonate: step 2/3. Functionally, catalyzes the condensation of carbamoyl phosphate and aspartate to form carbamoyl aspartate and inorganic phosphate, the committed step in the de novo pyrimidine nucleotide biosynthesis pathway. This chain is Aspartate carbamoyltransferase catalytic subunit, found in Pelotomaculum thermopropionicum (strain DSM 13744 / JCM 10971 / SI).